Reading from the N-terminus, the 589-residue chain is DNA ligase (589 aa).

Glu250 is a binding site for ATP. Lys252 (N6-AMP-lysine intermediate) is an active-site residue. Residues Arg257, Arg272, Glu302, Phe342, Arg417, and Lys423 each coordinate ATP.

The protein belongs to the ATP-dependent DNA ligase family. Mg(2+) is required as a cofactor.

The enzyme catalyses ATP + (deoxyribonucleotide)n-3'-hydroxyl + 5'-phospho-(deoxyribonucleotide)m = (deoxyribonucleotide)n+m + AMP + diphosphate.. DNA ligase that seals nicks in double-stranded DNA during DNA replication, DNA recombination and DNA repair. The sequence is that of DNA ligase from Cenarchaeum symbiosum (strain A).